We begin with the raw amino-acid sequence, 159 residues long: 2-C-methyl-D-erythritol 2,4-cyclodiphosphate synthase (159 aa).

Residues Asp10 and His12 each coordinate a divalent metal cation. 4-CDP-2-C-methyl-D-erythritol 2-phosphate is bound by residues 10–12 and 37–38; these read DVH and HS. Position 45 (His45) interacts with a divalent metal cation. 4-CDP-2-C-methyl-D-erythritol 2-phosphate contacts are provided by residues 59 to 61, 64 to 68, 103 to 109, 135 to 138, Phe142, and Arg145; these read DIG, FPDTD, AQAPKML, and TTTE.

It belongs to the IspF family. In terms of assembly, homotrimer. Requires a divalent metal cation as cofactor.

The enzyme catalyses 4-CDP-2-C-methyl-D-erythritol 2-phosphate = 2-C-methyl-D-erythritol 2,4-cyclic diphosphate + CMP. It participates in isoprenoid biosynthesis; isopentenyl diphosphate biosynthesis via DXP pathway; isopentenyl diphosphate from 1-deoxy-D-xylulose 5-phosphate: step 4/6. In terms of biological role, involved in the biosynthesis of isopentenyl diphosphate (IPP) and dimethylallyl diphosphate (DMAPP), two major building blocks of isoprenoid compounds. Catalyzes the conversion of 4-diphosphocytidyl-2-C-methyl-D-erythritol 2-phosphate (CDP-ME2P) to 2-C-methyl-D-erythritol 2,4-cyclodiphosphate (ME-CPP) with a corresponding release of cytidine 5-monophosphate (CMP). This Francisella tularensis subsp. novicida (strain U112) protein is 2-C-methyl-D-erythritol 2,4-cyclodiphosphate synthase.